A 468-amino-acid polypeptide reads, in one-letter code: Uronate isomerase (468 aa).

It belongs to the metallo-dependent hydrolases superfamily. Uronate isomerase family.

The catalysed reaction is D-glucuronate = D-fructuronate. It catalyses the reaction aldehydo-D-galacturonate = keto-D-tagaturonate. The protein operates within carbohydrate metabolism; pentose and glucuronate interconversion. The protein is Uronate isomerase of Endomicrobium trichonymphae.